A 374-amino-acid chain; its full sequence is Chaperone protein DnaJ (374 aa).

A J domain is found at 5-70; sequence DYYEVLGVSK…QKRAAYDQYG (66 aa). The segment at 132–210 adopts a CR-type zinc-finger fold; sequence GTTVKIRVPT…CHGHGRVEET (79 aa). Cys145, Cys148, Cys162, Cys165, Cys184, Cys187, Cys198, and Cys201 together coordinate Zn(2+). CXXCXGXG motif repeat units follow at residues 145–152, 162–169, 184–191, and 198–205; these read CKPCGGSG, CTTCGGHG, CPNCRGQG, and CKECHGHG.

The protein belongs to the DnaJ family. Homodimer. It depends on Zn(2+) as a cofactor.

Its subcellular location is the cytoplasm. In terms of biological role, participates actively in the response to hyperosmotic and heat shock by preventing the aggregation of stress-denatured proteins and by disaggregating proteins, also in an autonomous, DnaK-independent fashion. Unfolded proteins bind initially to DnaJ; upon interaction with the DnaJ-bound protein, DnaK hydrolyzes its bound ATP, resulting in the formation of a stable complex. GrpE releases ADP from DnaK; ATP binding to DnaK triggers the release of the substrate protein, thus completing the reaction cycle. Several rounds of ATP-dependent interactions between DnaJ, DnaK and GrpE are required for fully efficient folding. Also involved, together with DnaK and GrpE, in the DNA replication of plasmids through activation of initiation proteins. This chain is Chaperone protein DnaJ, found in Saccharophagus degradans (strain 2-40 / ATCC 43961 / DSM 17024).